A 177-amino-acid polypeptide reads, in one-letter code: Small ribosomal subunit protein uS5 (177 aa).

The S5 DRBM domain occupies 21–84 (LKEKMISVNR…DEARRGMIKI (64 aa)).

The protein belongs to the universal ribosomal protein uS5 family. In terms of assembly, part of the 30S ribosomal subunit. Contacts proteins S4 and S8.

Its function is as follows. With S4 and S12 plays an important role in translational accuracy. Located at the back of the 30S subunit body where it stabilizes the conformation of the head with respect to the body. The chain is Small ribosomal subunit protein uS5 from Nitrosomonas eutropha (strain DSM 101675 / C91 / Nm57).